Here is a 379-residue protein sequence, read N- to C-terminus: Mannan endo-1,4-beta-mannosidase 7 (379 aa).

Substrate-binding residues include tryptophan 64 and asparagine 179. The Proton donor role is filled by glutamate 180. Residue tyrosine 260 participates in substrate binding. The active-site Nucleophile is the glutamate 300. Tryptophan 342 contributes to the substrate binding site.

It belongs to the glycosyl hydrolase 5 (cellulase A) family. In terms of tissue distribution, expression not detected.

It catalyses the reaction Random hydrolysis of (1-&gt;4)-beta-D-mannosidic linkages in mannans, galactomannans and glucomannans.. The polypeptide is Mannan endo-1,4-beta-mannosidase 7 (MAN7) (Oryza sativa subsp. japonica (Rice)).